A 512-amino-acid polypeptide reads, in one-letter code: Glycerol kinase (512 aa).

Residue Thr14 participates in ADP binding. 3 residues coordinate ATP: Thr14, Thr15, and Ser16. A sn-glycerol 3-phosphate-binding site is contributed by Thr14. Arg18 contributes to the ADP binding site. Sn-glycerol 3-phosphate is bound by residues Arg83, Glu84, Tyr135, and Asp244. Positions 83, 84, 135, 244, and 245 each coordinate glycerol. Residues Thr266, Gly309, Gly410, and Asn414 each contribute to the ADP site. 3 residues coordinate ATP: Thr266, Gly309, and Gly410.

Belongs to the FGGY kinase family.

The catalysed reaction is glycerol + ATP = sn-glycerol 3-phosphate + ADP + H(+). The protein operates within polyol metabolism; glycerol degradation via glycerol kinase pathway; sn-glycerol 3-phosphate from glycerol: step 1/1. Inhibited by fructose 1,6-bisphosphate (FBP). Its function is as follows. Key enzyme in the regulation of glycerol uptake and metabolism. Catalyzes the phosphorylation of glycerol to yield sn-glycerol 3-phosphate. The protein is Glycerol kinase of Gluconobacter oxydans (strain 621H) (Gluconobacter suboxydans).